Reading from the N-terminus, the 1600-residue chain is A disintegrin and metalloproteinase with thrombospondin motifs 12 (1600 aa).

An N-terminal signal peptide occupies residues 1-25 (MPCARGSWLAKLSIVAQLINFGAFC). A propeptide spanning residues 26–244 (HGRQTQPWPV…TLRSRSLSRR (219 aa)) is cleaved from the precursor. Asn105 is a glycosylation site (N-linked (GlcNAc...) asparagine). Positions 210–217 (PICGLKDS) match the Cysteine switch motif. Zn(2+) is bound at residue Cys212. The region spanning 250 to 460 (RWVETLVVAD…GRGFCLDDIP (211 aa)) is the Peptidase M12B domain. Cystine bridges form between Cys326-Cys380, Cys355-Cys362, Cys374-Cys455, Cys413-Cys439, Cys482-Cys505, Cys493-Cys511, Cys500-Cys530, Cys524-Cys535, Cys558-Cys595, Cys562-Cys600, and Cys573-Cys585. His396 contributes to the Zn(2+) binding site. Glu397 is an active-site residue. Residues His400 and His406 each coordinate Zn(2+). The Disintegrin domain occupies 469 to 548 (VIAPGVIYDV…GKKPESIPGG (80 aa)). 4 TSP type-1 domains span residues 546 to 601 (PGGW…HPCR), 827 to 887 (KLLY…KDCP), 891 to 947 (WAGE…RDIL), and 948 to 1001 (CPSD…QQCP). Residues 705–831 (CQTVKKLFRQ…DNDVEKLLYF (127 aa)) are spacer 1. The segment at 1001–1321 (PFSRRVLKPN…HLMKDHSPAY (321 aa)) is spacer 2. 2 disordered regions span residues 1006-1140 (VLKP…LSSS) and 1158-1179 (PEVE…KDKS). Over residues 1038–1047 (PTPLSTPTVP) the composition is skewed to low complexity. Residues 1048–1107 (ESMSTSTPTINSLGSTIASQEDANGMGWQNNSTQAEEGSHFPTSSGSTSQVPVTSWSLSI) are compositionally biased toward polar residues. The segment covering 1130–1140 (TTTSDSGLSSS) has biased composition (low complexity). 4 consecutive TSP type-1 domains span residues 1318 to 1371 (SPAY…RPCA), 1373 to 1428 (WRVG…CNLE), 1429 to 1477 (PCGE…NRHL), and 1478 to 1538 (CCHW…QACR). Residues 1541–1581 (ADLTCLKDRLSISFCQTLKSMRKCSVPSVRAQCCLSCPQAP) enclose the PLAC domain.

In terms of assembly, interacts with COMP. The cofactor is Zn(2+). In terms of processing, the precursor is cleaved by a furin endopeptidase. Subjected to an intracellular maturation process yielding a 120 kDa N-terminal fragment containing the metalloproteinase, disintegrin, one TSP type-1 and the Cys-rich domains and a 83 kDa C-terminal fragment containing the spacer 2 and four TSP type-1 domains. Post-translationally, glycosylated. Can be O-fucosylated by POFUT2 on a serine or a threonine residue found within the consensus sequence C1-X(2)-(S/T)-C2-G of the TSP type-1 repeat domains where C1 and C2 are the first and second cysteine residue of the repeat, respectively. Fucosylated repeats can then be further glycosylated by the addition of a beta-1,3-glucose residue by the glucosyltransferase, B3GALTL. Fucosylation mediates the efficient secretion of ADAMTS family members. Can also be C-glycosylated with one or two mannose molecules on tryptophan residues within the consensus sequence W-X-X-W of the TPRs, and N-glycosylated. These other glycosylations can also facilitate secretion.

It is found in the secreted. The protein resides in the extracellular space. Its subcellular location is the extracellular matrix. Its activity is regulated as follows. Inhibited by alpha-2 macroglobulin. Metalloprotease that plays a role in the degradation of COMP. Also cleaves alpha-2 macroglobulin and aggregan. Has anti-tumorigenic properties. This is A disintegrin and metalloproteinase with thrombospondin motifs 12 (Adamts12) from Mus musculus (Mouse).